The primary structure comprises 2102 residues: Probable serine/threonine-protein kinase DDB_G0272282 (2102 aa).

One can recognise a PX domain in the interval 1 to 118 (MKYQLSILGD…NWLVPQNEPA (118 aa)). Positions 124 to 222 (NPDKSGYLIK…WIKAIELSQQ (99 aa)) constitute a PH domain. Basic and acidic residues predominate over residues 225 to 240 (QDQEQYRKQEEEERQK). 9 disordered regions span residues 225-289 (QDQE…SDGS), 302-390 (GPNN…SDLN), 426-558 (EQPG…SASP), 574-665 (SNLP…PLPN), 685-768 (NNNS…NNSL), 804-842 (KKKEKDKEKEKDKEKEKEKEIGGNISTSTTPNKKNGTLR), 1029-1051 (QQQQQKQNETTGTTTGTAGSSVN), 1106-1224 (GTPT…PQPQ), and 1476-1514 (SSKVDSSSSSQISSPILSSPPPPMKQPPPQVIVPPSSLT). 2 stretches are compositionally biased toward low complexity: residues 256-281 (STLTSASAPTSPVQSSSSTSNMLPSS) and 304-327 (NNSNNNNNNNNNSYYYSHSSNNHN). Residues 328–348 (HYNHHNNNHNNSHHHHHHHNG) show a composition bias toward basic residues. Low complexity-rich tracts occupy residues 353–376 (SSQVSLSVNTTSSNSSGSSSSTSL) and 426–437 (EQPGSYQQPQHQ). Over residues 438–450 (QGGGGGGGGGGGN) the composition is skewed to gly residues. A compositionally biased stretch (low complexity) spans 466 to 484 (SNLSSRSNSNSSGSSSGSG). Gly residues predominate over residues 485-501 (SSSGSGPIGSGGVGGGL). Low complexity-rich tracts occupy residues 535 to 558 (SNSSSSISSSSSSSSASSASSASP) and 587 to 626 (NANNNNNNNNNNNNNNNNNNNNDFNLNNNNNNNNNNNNGN). Positions 627-659 (TASGSSCNTTPNLLPAPTNVSPIQNRARSSPMT) are enriched in polar residues. Residues 804-824 (KKKEKDKEKEKDKEKEKEKEI) show a composition bias toward basic and acidic residues. The span at 827–841 (NISTSTTPNKKNGTL) shows a compositional bias: polar residues. The span at 1106 to 1118 (GTPTTTSGDNTPL) shows a compositional bias: polar residues. Low complexity-rich tracts occupy residues 1119 to 1182 (TNTA…NSSI), 1196 to 1221 (EQQQEQQQQQHQEQPLQPQQQQQQQP), and 1476 to 1492 (SSKVDSSSSSQISSPIL). Pro residues predominate over residues 1493 to 1507 (SSPPPPMKQPPPQVI). In terms of domain architecture, Protein kinase spans 1527–1851 (FEIIKPISRG…AYEVKTHPFF (325 aa)). ATP is bound by residues 1533–1541 (ISRGAFGRV) and lysine 1556. Aspartate 1650 serves as the catalytic Proton acceptor. 3 stretches are compositionally biased toward low complexity: residues 1687 to 1729 (NTNT…SQTN), 1902 to 1999 (SQPQ…NINN), and 2006 to 2052 (NNNS…QINN). Disordered regions lie at residues 1687–1741 (NTNT…KNTL) and 1902–2070 (SQPQ…SKIE). The AGC-kinase C-terminal domain occupies 1852-1911 (ANVNWDTLIDQEMDNIFLPKPENNYDTDYFWDRQSMYDDEAEDDFLTINQSQPQHQSQHQ).

Belongs to the protein kinase superfamily. AGC Ser/Thr protein kinase family.

The catalysed reaction is L-seryl-[protein] + ATP = O-phospho-L-seryl-[protein] + ADP + H(+). The enzyme catalyses L-threonyl-[protein] + ATP = O-phospho-L-threonyl-[protein] + ADP + H(+). The protein is Probable serine/threonine-protein kinase DDB_G0272282 of Dictyostelium discoideum (Social amoeba).